The primary structure comprises 68 residues: Protein SlyX homolog (68 aa).

This sequence belongs to the SlyX family.

The chain is Protein SlyX homolog from Pseudomonas fluorescens (strain SBW25).